The following is a 241-amino-acid chain: ATP synthase subunit a (241 aa).

5 consecutive transmembrane segments (helical) span residues 30 to 50, 91 to 111, 128 to 148, 193 to 213, and 214 to 234; these read GQVF…VVIG, FIGT…LVPW, INTT…AGLS, LVVA…VMFL, and GLFT…YYIG.

The protein belongs to the ATPase A chain family. In terms of assembly, F-type ATPases have 2 components, CF(1) - the catalytic core - and CF(0) - the membrane proton channel. CF(1) has five subunits: alpha(3), beta(3), gamma(1), delta(1), epsilon(1). CF(0) has four main subunits: a, b, b' and c.

It localises to the cellular thylakoid membrane. Key component of the proton channel; it plays a direct role in the translocation of protons across the membrane. The sequence is that of ATP synthase subunit a from Prochlorococcus marinus (strain NATL1A).